Here is a 450-residue protein sequence, read N- to C-terminus: Tubulin beta-3 chain (450 aa).

An MREI motif motif is present at residues 1-4; that stretch reads MREI. Residues Gln11, Glu69, Ser138, Gly142, Thr143, and Gly144 each coordinate GTP. Glu69 contacts Mg(2+). The residue at position 172 (Ser172) is a Phosphoserine; by CDK1. 2 residues coordinate GTP: Asn204 and Asn226. Residues 422–450 are disordered; it reads YQQYQDATAEEEGEMYEDDDEESEAQGPK. Residues 429–450 show a composition bias toward acidic residues; the sequence is TAEEEGEMYEDDDEESEAQGPK. At Glu438 the chain carries 5-glutamyl polyglutamate. Residue Ser444 is modified to Phosphoserine.

This sequence belongs to the tubulin family. As to quaternary structure, heterodimer of alpha- and beta-tubulin. A typical microtubule is a hollow water-filled tube with an outer diameter of 25 nm and an inner diameter of 15 nM. Alpha-beta heterodimers associate head-to-tail to form protofilaments running lengthwise along the microtubule wall with the beta-tubulin subunit facing the microtubule plus end conferring a structural polarity. Microtubules usually have 13 protofilaments but different protofilament numbers can be found in some organisms and specialized cells. Interacts with gamma-tubulin; the interaction allows microtubules to nucleate from the gamma-tubulin ring complex (gTuRC). Interacts with UNC5C (via cytoplasmic domain); this interaction is decreased by NTN1/Netrin-1. Interacts with NLRP5/MATER at cytoskeleton microtubules. Interacts with DPYSL5. Interacts with CFAP61. Mg(2+) is required as a cofactor. Some glutamate residues at the C-terminus are polyglycylated, resulting in polyglycine chains on the gamma-carboxyl group. Glycylation is mainly limited to tubulin incorporated into axonemes (cilia and flagella) whereas glutamylation is prevalent in neuronal cells, centrioles, axonemes, and the mitotic spindle. Both modifications can coexist on the same protein on adjacent residues, and lowering polyglycylation levels increases polyglutamylation, and reciprocally. Cilia and flagella glycylation is required for their stability and maintenance. Flagella glycylation controls sperm motility. Post-translationally, some glutamate residues at the C-terminus are polyglutamylated, resulting in polyglutamate chains on the gamma-carboxyl group. Polyglutamylation plays a key role in microtubule severing by spastin (SPAST). SPAST preferentially recognizes and acts on microtubules decorated with short polyglutamate tails: severing activity by SPAST increases as the number of glutamates per tubulin rises from one to eight, but decreases beyond this glutamylation threshold. Glutamylation is also involved in cilia motility. In terms of processing, phosphorylated on Ser-172 by CDK1 during the cell cycle, from metaphase to telophase, but not in interphase. This phosphorylation inhibits tubulin incorporation into microtubules.

It is found in the cytoplasm. Its subcellular location is the cytoskeleton. The protein resides in the cell projection. The protein localises to the growth cone. It localises to the lamellipodium. It is found in the filopodium. Tubulin is the major constituent of microtubules, protein filaments consisting of alpha- and beta-tubulin heterodimers. Microtubules grow by the addition of GTP-tubulin dimers to the microtubule end, where a stabilizing cap forms. Below the cap, alpha-beta tubulin heterodimers are in GDP-bound state, owing to GTPase activity of alpha-tubulin. TUBB3 plays a critical role in proper axon guidance and maintenance. Binding of NTN1/Netrin-1 to its receptor UNC5C might cause dissociation of UNC5C from polymerized TUBB3 in microtubules and thereby lead to increased microtubule dynamics and axon repulsion. Plays a role in dorsal root ganglion axon projection towards the spinal cord. In Rattus norvegicus (Rat), this protein is Tubulin beta-3 chain (Tubb3).